Reading from the N-terminus, the 687-residue chain is Putative secreted metallopeptidase (687 aa).

The N-terminal stretch at 1-22 is a signal peptide; that stretch reads MLFTSTAVAALSGALLIQPALA. N54, N114, N252, N256, and N379 each carry an N-linked (GlcNAc...) asparagine glycan.

The protein belongs to the peptidase M10B family.

Its subcellular location is the secreted. The sequence is that of Putative secreted metallopeptidase from Arthroderma benhamiae (strain ATCC MYA-4681 / CBS 112371) (Trichophyton mentagrophytes).